Consider the following 147-residue polypeptide: Lectin-like protein BA14k (147 aa).

A signal peptide spans 1–26 (MNSFRKTCAGALALIFGATSIVPTVA). Residues 80-100 (GWWYPLAAFGAGAIIGGAISQ) traverse the membrane as a helical segment.

Belongs to the BA14k family.

Its subcellular location is the cell membrane. Functionally, has immunoglobulin-binding and hemagglutination properties, and can bind to mannose. Essential for virulence. May be involved in LPS biosynthesis or polysaccharide transport. The chain is Lectin-like protein BA14k from Brucella abortus (strain S19).